Here is a 115-residue protein sequence, read N- to C-terminus: Nitrogen regulatory protein P-II 2 (115 aa).

Tyrosine 54 is modified (O-UMP-tyrosine).

Belongs to the P(II) protein family.

Could be involved in the regulation of nitrogen fixation. The sequence is that of Nitrogen regulatory protein P-II 2 from Methanothermobacter thermautotrophicus (strain ATCC 29096 / DSM 1053 / JCM 10044 / NBRC 100330 / Delta H) (Methanobacterium thermoautotrophicum).